Reading from the N-terminus, the 438-residue chain is 23S rRNA (uracil(1939)-C(5))-methyltransferase RlmD (438 aa).

Positions 10–69 (KASVNTKHLSVDVVRLDHNGAGIAFVDKKPVFIEGALPGEKAIIQFIEQKKQFSRAKLIK) constitute a TRAM domain. [4Fe-4S] cluster contacts are provided by Cys82, Cys88, Cys91, and Cys169. The S-adenosyl-L-methionine site is built by Gln272, Phe301, Asn306, Glu322, Asn349, and Asp370. Cys396 acts as the Nucleophile in catalysis.

Belongs to the class I-like SAM-binding methyltransferase superfamily. RNA M5U methyltransferase family. RlmD subfamily.

It carries out the reaction uridine(1939) in 23S rRNA + S-adenosyl-L-methionine = 5-methyluridine(1939) in 23S rRNA + S-adenosyl-L-homocysteine + H(+). Catalyzes the formation of 5-methyl-uridine at position 1939 (m5U1939) in 23S rRNA. In Aliivibrio fischeri (strain MJ11) (Vibrio fischeri), this protein is 23S rRNA (uracil(1939)-C(5))-methyltransferase RlmD.